A 1157-amino-acid polypeptide reads, in one-letter code: Peroxisomal ATPase PEX1 (1157 aa).

2 disordered regions span residues 187 to 221 (SISSVRSDSSGHRIRRVRSSTSTATGRRSVTNNGE) and 1135 to 1157 (SGRDGNMPDGTASNEIGARSTLM). Residues 205-217 (SSTSTATGRRSVT) are compositionally biased toward low complexity.

Belongs to the AAA ATPase family. In terms of assembly, interacts with PEX6; forming the PEX1-PEX6 AAA ATPase complex, which is composed of a heterohexamer formed by a trimer of PEX1-PEX6 dimers.

It is found in the membrane. It catalyses the reaction ATP + H2O = ADP + phosphate + H(+). Its function is as follows. Component of the PEX1-PEX6 AAA ATPase complex involved in peroxisome biosynthesis. The complex acts as a protein dislocase complex that mediates the ATP-dependent extraction of the PEX5 receptor from peroxisomal membranes, an essential step for PEX5 recycling. Specifically recognizes PEX5 monoubiquitinated at 'Cys-6', and pulls it out of the peroxisome lumen through the PEX2-PEX10-PEX12 retrotranslocation channel. Extraction by the PEX1-PEX6 AAA ATPase complex is accompanied by unfolding of the TPR repeats and release of bound cargo from PEX5. The polypeptide is Peroxisomal ATPase PEX1 (Komagataella pastoris (Yeast)).